The chain runs to 484 residues: tRNA-2-methylthio-N(6)-dimethylallyladenosine synthase (484 aa).

An MTTase N-terminal domain is found at 36 to 153 (GKLYIKTHGC…LPELIRARRE (118 aa)). C45, C82, C116, C190, C194, and C197 together coordinate [4Fe-4S] cluster. In terms of domain architecture, Radical SAM core spans 176-415 (RAEGPSAFVS…HINAHAASIS (240 aa)). One can recognise a TRAM domain in the interval 416 to 479 (QSMVGSVQRV…SNSLRGRIQL (64 aa)). The interval 428–450 (EGPSRRDPNELTGKSENMRPVNF) is disordered.

The protein belongs to the methylthiotransferase family. MiaB subfamily. In terms of assembly, monomer. [4Fe-4S] cluster is required as a cofactor.

It is found in the cytoplasm. It carries out the reaction N(6)-dimethylallyladenosine(37) in tRNA + (sulfur carrier)-SH + AH2 + 2 S-adenosyl-L-methionine = 2-methylsulfanyl-N(6)-dimethylallyladenosine(37) in tRNA + (sulfur carrier)-H + 5'-deoxyadenosine + L-methionine + A + S-adenosyl-L-homocysteine + 2 H(+). Functionally, catalyzes the methylthiolation of N6-(dimethylallyl)adenosine (i(6)A), leading to the formation of 2-methylthio-N6-(dimethylallyl)adenosine (ms(2)i(6)A) at position 37 in tRNAs that read codons beginning with uridine. The sequence is that of tRNA-2-methylthio-N(6)-dimethylallyladenosine synthase from Xanthomonas axonopodis pv. citri (strain 306).